We begin with the raw amino-acid sequence, 507 residues long: MYLPIFCIFLSVVDSLRILQIVPGFTNSHVLFNYRLAETLRFLGHDVKMWTQMEMAMLDTGNNKLPEGVSEYRIPIHFTDTLKTEGLKVFQSMMFESGDAHDLWWTGQEFKDMRVEACEQMLRHDESVYEDFRKDGFDVAIAHFHDLCPLAIAKKMNVKRVIWITHGTSIYEFSAVQLGLRTIPSTIPHPLSSAGFSQLFLDRVQNTLWHLSLLDFVNLPQNLLVDENLFYREFVGADQDDLWDLAKTTVPSLLINGDRMLDFPRPLPIHIAFSGELGVSKGKKLVMEKWLEDIIEKPSDGLIVFSLGTVSNTTNMPAQMINSFLGAFGKLKTYTILWRMEKSVAGAEKYENLHLVKWLPQKDIMRHPKMKLMIAHGGYNSFLEAAQAGIPAVLMPLFADQKINAKRAQRYGMATVLDKLDLTINNVYGAIKEALKPEYSTNAKKLSAMLSDQVARKPYSALRYSLKLATSPKPSLFTLKSQHLSFLEFHNLDIFSIVLLTAFIVCF.

An N-terminal signal peptide occupies residues 1-15 (MYLPIFCIFLSVVDS). N-linked (GlcNAc...) asparagine glycosylation occurs at asparagine 312. Residues 379 to 399 (YNSFLEAAQAGIPAVLMPLFA) traverse the membrane as a helical segment.

The protein belongs to the UDP-glycosyltransferase family.

It localises to the membrane. It carries out the reaction glucuronate acceptor + UDP-alpha-D-glucuronate = acceptor beta-D-glucuronoside + UDP + H(+). This chain is Putative UDP-glucuronosyltransferase ugt-60 (ugt-60), found in Caenorhabditis elegans.